Here is a 261-residue protein sequence, read N- to C-terminus: Phosphatidylglycerol--prolipoprotein diacylglyceryl transferase (261 aa).

7 consecutive transmembrane segments (helical) span residues 19–39, 56–76, 92–112, 126–146, 173–193, 199–219, and 227–247; these read VHWYGLMYLVGFAMAWGLALY, LIFYGALGLIIGGRLGYMLFY, WRGGMSFHGGLIGVIVTTWIF, FVVPLVPLGLAAGRIGNFING, QLYEFLLEGALLFIVIWWFSA, FAVSSLFLLCYGLFRFTAEFF, and GFVAFGWLTRGQELSLPMIII. R139 is an a 1,2-diacyl-sn-glycero-3-phospho-(1'-sn-glycerol) binding site.

Belongs to the Lgt family.

Its subcellular location is the cell inner membrane. The catalysed reaction is L-cysteinyl-[prolipoprotein] + a 1,2-diacyl-sn-glycero-3-phospho-(1'-sn-glycerol) = an S-1,2-diacyl-sn-glyceryl-L-cysteinyl-[prolipoprotein] + sn-glycerol 1-phosphate + H(+). It participates in protein modification; lipoprotein biosynthesis (diacylglyceryl transfer). Catalyzes the transfer of the diacylglyceryl group from phosphatidylglycerol to the sulfhydryl group of the N-terminal cysteine of a prolipoprotein, the first step in the formation of mature lipoproteins. This Coxiella burnetii (strain Dugway 5J108-111) protein is Phosphatidylglycerol--prolipoprotein diacylglyceryl transferase.